The sequence spans 914 residues: Golgin candidate 6 (914 aa).

Coiled-coil stretches lie at residues 723–837 (IEKQ…SLKG) and 863–901 (EDEL…LEDI). The residue at position 911 (S911) is a Phosphoserine.

The protein resides in the golgi apparatus. It is found in the golgi stack. Golgi matrix protein playing a role in tethering of vesicles to Golgi membranes and in maintaining the overall structure of the Golgi apparatus. Functions in the anterograde transport of storage protein precursors from the endoplasmic reticulum (ER) to the Golgi complex. This chain is Golgin candidate 6 (GC6), found in Arabidopsis thaliana (Mouse-ear cress).